A 654-amino-acid polypeptide reads, in one-letter code: Kelch-like protein 13 (654 aa).

Positions 91–160 constitute a BTB domain; that stretch reads CDVTLMPGDT…IYTAKLSLNM (70 aa). Residues 195 to 296 form the BACK domain; it reads CVEVGRIANT…TPQELINYVQ (102 aa). Kelch repeat units follow at residues 340–388, 389–440, 441–487, 489–534, 536–586, and 587–635; these read RLVT…VIGN, FLYV…ALKG, FLYA…VYGG, MYIS…TVGD, LYVI…VFEN, and KIYV…TLTV.

In terms of assembly, component of the BCR(KLHL9-KLHL13) E3 ubiquitin ligase complex, at least composed of CUL3, KLHL9, KLHL13 and RBX1. Interacts with AURKB.

It functions in the pathway protein modification; protein ubiquitination. In terms of biological role, substrate-specific adapter of a BCR (BTB-CUL3-RBX1) E3 ubiquitin-protein ligase complex required for mitotic progression and cytokinesis. The BCR(KLHL9-KLHL13) E3 ubiquitin ligase complex mediates the ubiquitination of AURKB and controls the dynamic behavior of AURKB on mitotic chromosomes and thereby coordinates faithful mitotic progression and completion of cytokinesis. The chain is Kelch-like protein 13 (Klhl13) from Mus musculus (Mouse).